The chain runs to 515 residues: AAA ATPase forming ring-shaped complexes (515 aa).

A coiled-coil region spans residues 2 to 49 (NDHDEETLASLQQANDQLMAKNHALVKALSRATQEMTKTKAQLNQLAG). 240 to 245 (GNGKTL) is a binding site for ATP.

This sequence belongs to the AAA ATPase family. Homohexamer. Assembles into a hexameric ring structure.

In Bifidobacterium adolescentis (strain ATCC 15703 / DSM 20083 / NCTC 11814 / E194a), this protein is AAA ATPase forming ring-shaped complexes.